The primary structure comprises 174 residues: Crossover junction endodeoxyribonuclease RuvC (174 aa).

Residues aspartate 8, glutamate 68, and aspartate 140 contribute to the active site. 3 residues coordinate Mg(2+): aspartate 8, glutamate 68, and aspartate 140.

It belongs to the RuvC family. As to quaternary structure, homodimer which binds Holliday junction (HJ) DNA. The HJ becomes 2-fold symmetrical on binding to RuvC with unstacked arms; it has a different conformation from HJ DNA in complex with RuvA. In the full resolvosome a probable DNA-RuvA(4)-RuvB(12)-RuvC(2) complex forms which resolves the HJ. Requires Mg(2+) as cofactor.

It is found in the cytoplasm. The catalysed reaction is Endonucleolytic cleavage at a junction such as a reciprocal single-stranded crossover between two homologous DNA duplexes (Holliday junction).. Its function is as follows. The RuvA-RuvB-RuvC complex processes Holliday junction (HJ) DNA during genetic recombination and DNA repair. Endonuclease that resolves HJ intermediates. Cleaves cruciform DNA by making single-stranded nicks across the HJ at symmetrical positions within the homologous arms, yielding a 5'-phosphate and a 3'-hydroxyl group; requires a central core of homology in the junction. The consensus cleavage sequence is 5'-(A/T)TT(C/G)-3'. Cleavage occurs on the 3'-side of the TT dinucleotide at the point of strand exchange. HJ branch migration catalyzed by RuvA-RuvB allows RuvC to scan DNA until it finds its consensus sequence, where it cleaves and resolves the cruciform DNA. The sequence is that of Crossover junction endodeoxyribonuclease RuvC from Legionella pneumophila subsp. pneumophila (strain Philadelphia 1 / ATCC 33152 / DSM 7513).